The primary structure comprises 139 residues: ATP synthase epsilon chain (139 aa).

Belongs to the ATPase epsilon chain family. F-type ATPases have 2 components, CF(1) - the catalytic core - and CF(0) - the membrane proton channel. CF(1) has five subunits: alpha(3), beta(3), gamma(1), delta(1), epsilon(1). CF(0) has three main subunits: a, b and c.

The protein resides in the cell inner membrane. Produces ATP from ADP in the presence of a proton gradient across the membrane. This Erwinia tasmaniensis (strain DSM 17950 / CFBP 7177 / CIP 109463 / NCPPB 4357 / Et1/99) protein is ATP synthase epsilon chain.